A 2089-amino-acid polypeptide reads, in one-letter code: Rho GTPase-activating protein 32 (2089 aa).

A disordered region spans residues 24–52 (TQLTDGDEEEREESFRKMKSSIHSEEDDF). Residues 131–245 (GSIQLSLSEE…LTWMEIDNKG (115 aa)) enclose the PX; atypical domain. Residues 259–321 (PAVGAAHVIK…PGHCVELINQ (63 aa)) form the SH3 domain. Residues 372 to 567 (CDLGEHLLNS…FILNHVDVLF (196 aa)) form the Rho-GAP domain. 4 positions are modified to phosphoserine: Ser-706, Ser-709, Ser-732, and Ser-738. Positions 828-837 (KLSPSKKDAE) are enriched in basic and acidic residues. The disordered stretch occupies residues 828–858 (KLSPSKKDAEAGGSQSQTPGSTASSEPVSPV). The span at 840–854 (GSQSQTPGSTASSEP) shows a compositional bias: polar residues. Phosphoserine occurs at positions 852, 856, 892, and 952. Disordered regions lie at residues 955–1037 (QLQL…PPPP), 1119–1141 (CNQP…TDSG), and 1154–1197 (LHRN…SVST). 2 stretches are compositionally biased toward polar residues: residues 998–1014 (LSSQ…QTGA) and 1132–1141 (PTQSNTTDSG). The segment covering 1175–1191 (DSEKSDDHGSFPEDHAG) has biased composition (basic and acidic residues). A Phosphoserine modification is found at Ser-1206. The interval 1221–1368 (GTSVDKPHHS…GDPAPIFLSD (148 aa)) is disordered. Residues 1225-1235 (DKPHHSSELTD) show a composition bias toward basic and acidic residues. A compositionally biased stretch (low complexity) spans 1262 to 1275 (TATMAYMMATPARA). Positions 1395–1714 (RAPPLHLRAE…YNYAGLPPRP (320 aa)) are interaction with GAB2. Arg-1526 and Arg-1536 each carry asymmetric dimethylarginine. At Ser-1588 the chain carries Phosphoserine. The tract at residues 1688-2089 (SSRDFAFYNP…PHPDTQIHAE (402 aa)) is interaction with FYN. 2 disordered regions span residues 1801 to 1865 (PGKT…QSSL) and 1881 to 2002 (RAHQ…LERD). Over residues 1826-1841 (GDERFYRKHPESEFDR) the composition is skewed to basic and acidic residues. The span at 1850–1865 (STQAEKPSLPQKQSSL) shows a compositional bias: polar residues. The segment covering 1881–1892 (RAHQEASHRQLC) has biased composition (basic and acidic residues). The span at 1918 to 1939 (SEPSNYHNSGKYMTSGQGSLTL) shows a compositional bias: polar residues. Composition is skewed to basic and acidic residues over residues 1940 to 1954 (NHKE…DRPR) and 1961 to 1975 (PEKH…EEHF). Arg-2039 is modified (omega-N-methylarginine).

This sequence belongs to the PX domain-containing GAP family. As to quaternary structure, interacts with NTRK1 (via cytoplasmic domain); the interaction is independent of the phosphorylation state of NTRK1. Interacts with SHC3 (via SH2 domain). Interacts with RASA1 (via SH3 domain); the interaction is necessary for the Ras activation and cell transforming activities of ARHGAP32. Interacts with GAB1 and GAB2. Interacts with CRK and CRKL. Found in a complex with CRKL and BCAR1; upon EGF stimulation BCAR1 may be replaced by EGFR. Interacts with NCK1 (via SH3 domain); NCK1 recruits phosphorylated BCAR1 to the complex. Isoform 2 interacts with FYN; the interaction appears to be dependent on tyrosine phosphorylation of ARHGAP32. Interacts with EGFR; the interaction requires EGF stimulation and is increased by SHC3. Interacts with CDC42; the interaction requires constitutively active CDC42. Interacts with CTNNB1, DLG4, CDH2 and GRIN2B. Interacts with GPHN. In terms of processing, isoform 2 is phosphorylated on multiple tyrosine residues by FYN. Phosphorylated tyrosine residues undergo dephosphorylation after stimulation of NMDA receptors. Phosphorylated in vitro by CaMK2 in the presence of calmodulin and calcium; which inhibits GAP activity. In terms of tissue distribution, isoform 1 and isoform 2 are highly expressed in brain, specially in cortex, corpus striatum, hippocampus and thalamus. Low levels in cerebellum, colon, small intestine, and kidney.

It localises to the postsynaptic density. The protein localises to the cell projection. The protein resides in the dendritic spine. It is found in the cytoplasm. Its subcellular location is the cell cortex. It localises to the endosome membrane. The protein localises to the golgi apparatus membrane. The protein resides in the endoplasmic reticulum membrane. It is found in the membrane. In terms of biological role, GTPase-activating protein (GAP) promoting GTP hydrolysis on RHOA, CDC42 and RAC1 small GTPases. May be involved in the differentiation of neuronal cells during the formation of neurite extensions. Involved in NMDA receptor activity-dependent actin reorganization in dendritic spines. May mediate cross-talks between Ras- and Rho-regulated signaling pathways in cell growth regulation. Isoform 2 has higher GAP activity. The protein is Rho GTPase-activating protein 32 (Arhgap32) of Mus musculus (Mouse).